The following is a 285-amino-acid chain: V-set and transmembrane domain-containing protein 2B (285 aa).

An N-terminal signal peptide occupies residues 1 to 28 (MEQRNRLGALGYLLPLLLHSLLLFVADA). The Ig-like V-type domain maps to 29 to 143 (TFTEVPKDVT…DDDTQEHKAQ (115 aa)). The Extracellular segment spans residues 29–263 (TFTEVPKDVT…HGSGTGPGYS (235 aa)). Cysteines 49 and 127 form a disulfide. A disordered region spans residues 160–225 (AEAVSHIQSS…AAAAAASATH (66 aa)). 2 stretches are compositionally biased toward low complexity: residues 176 to 189 (ASSA…GAAV) and 208 to 225 (PAGS…SATH). A helical transmembrane segment spans residues 264-284 (ADPLLSLLLLALHKFLHPLLG). Residue His285 is a topological domain, cytoplasmic.

The protein resides in the membrane. The protein is V-set and transmembrane domain-containing protein 2B (Vstm2b) of Mus musculus (Mouse).